The chain runs to 564 residues: Kelch-like protein 12 (564 aa).

A BTB domain is found at 29–96; that stretch reads CDVTLRVNLK…VYTETVHVTV (68 aa). The region spanning 131 to 232 is the BACK domain; the sequence is CLGIRDFAET…LTPRYITDVI (102 aa). 6 Kelch repeats span residues 278 to 325, 327 to 375, 376 to 422, 423 to 469, 471 to 516, and 518 to 563; these read VLLV…SLGD, VYVI…TLGD, MIYV…VANG, VIYC…LLND, IYVV…VLRG, and LYAI…VLRE.

In terms of assembly, component of the BCR(KLHL12) E3 ubiquitin ligase complex.

It localises to the cytoplasmic vesicle. The protein localises to the COPII-coated vesicle. It functions in the pathway protein modification; protein ubiquitination. Functionally, substrate-specific adapter of a BCR (BTB-CUL3-RBX1) E3 ubiquitin ligase complex that acts as a negative regulator of Wnt signaling pathway and ER-Golgi transport. The BCR(KLHL12) complex is involved in ER-Golgi transport by regulating the size of COPII coats, thereby playing a key role in collagen export, which is required for embryonic stem (ES) cells division. This is Kelch-like protein 12 (klhl12) from Xenopus laevis (African clawed frog).